The primary structure comprises 363 residues: Fructose-bisphosphate aldolase C (363 aa).

Arg56 and Lys147 together coordinate substrate. Lys230 functions as the Schiff-base intermediate with dihydroxyacetone-P in the catalytic mechanism.

Belongs to the class I fructose-bisphosphate aldolase family. Homotetramer. As to expression, expressed in brain but not in liver or muscle.

The enzyme catalyses beta-D-fructose 1,6-bisphosphate = D-glyceraldehyde 3-phosphate + dihydroxyacetone phosphate. It functions in the pathway carbohydrate degradation; glycolysis; D-glyceraldehyde 3-phosphate and glycerone phosphate from D-glucose: step 4/4. This Carassius auratus (Goldfish) protein is Fructose-bisphosphate aldolase C (aldoc).